Here is a 284-residue protein sequence, read N- to C-terminus: MLHNIQSILQFLLFVSSVQALETGGLKSKPPNLKLLECFEFKKNYWIVGHAFHTSSVQFKDECLRMCLTSSIRKAKCLSAMHVPNDDECVISDQNQVTKPDLFIENDTPGTFTVNFFRNICVDPPDAEGVDRFEARLQGYKGGEGIIEFAQAVGKNTQVMVVISGLKENSLYEINFLPDTKEKGGQCHRKSRVNGEGKTLMIVETDHTGMAVEPWKVIDFDGFEENVISKTIVVVEKSTQTIVDCGSIRLATASSNSSTTRTSSSTGLKFTTGLLIILVVFLFL.

The signal sequence occupies residues 1–20 (MLHNIQSILQFLLFVSSVQA). The 84-residue stretch at 38–121 (CFEFKKNYWI…FTVNFFRNIC (84 aa)) folds into the Apple domain. Cystine bridges form between Cys38/Cys121, Cys63/Cys89, and Cys67/Cys77. Asn256 is a glycosylation site (N-linked (GlcNAc...) asparagine). A helical membrane pass occupies residues 264-284 (SSTGLKFTTGLLIILVVFLFL).

It localises to the membrane. This is an uncharacterized protein from Caenorhabditis elegans.